Consider the following 571-residue polypeptide: Dihydroxy-acid dehydratase (571 aa).

Residue Cys-56 coordinates [2Fe-2S] cluster. Residue Asp-88 participates in Mg(2+) binding. Cys-129 provides a ligand contact to [2Fe-2S] cluster. Positions 130 and 131 each coordinate Mg(2+). At Lys-131 the chain carries N6-carboxylysine. Cys-201 serves as a coordination point for [2Fe-2S] cluster. Glu-452 serves as a coordination point for Mg(2+). Ser-478 serves as the catalytic Proton acceptor.

Belongs to the IlvD/Edd family. Homodimer. It depends on [2Fe-2S] cluster as a cofactor. Mg(2+) is required as a cofactor.

The catalysed reaction is (2R)-2,3-dihydroxy-3-methylbutanoate = 3-methyl-2-oxobutanoate + H2O. It carries out the reaction (2R,3R)-2,3-dihydroxy-3-methylpentanoate = (S)-3-methyl-2-oxopentanoate + H2O. Its pathway is amino-acid biosynthesis; L-isoleucine biosynthesis; L-isoleucine from 2-oxobutanoate: step 3/4. It functions in the pathway amino-acid biosynthesis; L-valine biosynthesis; L-valine from pyruvate: step 3/4. Functions in the biosynthesis of branched-chain amino acids. Catalyzes the dehydration of (2R,3R)-2,3-dihydroxy-3-methylpentanoate (2,3-dihydroxy-3-methylvalerate) into 2-oxo-3-methylpentanoate (2-oxo-3-methylvalerate) and of (2R)-2,3-dihydroxy-3-methylbutanoate (2,3-dihydroxyisovalerate) into 2-oxo-3-methylbutanoate (2-oxoisovalerate), the penultimate precursor to L-isoleucine and L-valine, respectively. This Streptococcus suis (strain 98HAH33) protein is Dihydroxy-acid dehydratase.